A 400-amino-acid polypeptide reads, in one-letter code: Hyaluronidase (400 aa).

Positions 1–19 are cleaved as a signal peptide; the sequence is MQTILVLTTFLSAWFLAVG. Disulfide bonds link C31–C319, C196–C209, C344–C355, C349–C384, and C386–C395. The active-site Proton donor is the E120. N-linked (GlcNAc...) asparagine glycans are attached at residues N129 and N166. N-linked (GlcNAc...) asparagine glycans are attached at residues N243 and N275. In terms of domain architecture, EGF-like spans 340-396; sequence NVARCSKQACSGRGRCTWPKDTSVIAWKFLVEKEDYDFYLGDIECKCVEGYEGRYCE.

Belongs to the glycosyl hydrolase 56 family. In terms of assembly, monomer. In terms of tissue distribution, expressed by the venom gland.

The protein localises to the secreted. The enzyme catalyses Random hydrolysis of (1-&gt;4)-linkages between N-acetyl-beta-D-glucosamine and D-glucuronate residues in hyaluronate.. Its function is as follows. Spider venom endo-hyaluronidase that is able to degrade purified hyaluronic acid (HA) and chondroitin sulfate (CS). Has no activity on dermatan sulfate (DS) and heparan sulfate (HS). Also increases the dermonecrotic effect of the dermonecrotic toxin (AC P0CE80), when injected in rabbit skin, supporting the hypothesis that venom hyaluronidases are spreading factors. This Loxosceles intermedia (Brown spider) protein is Hyaluronidase.